The following is a 134-amino-acid chain: Large ribosomal subunit protein bL20 (134 aa).

The protein belongs to the bacterial ribosomal protein bL20 family.

In terms of biological role, binds directly to 23S ribosomal RNA and is necessary for the in vitro assembly process of the 50S ribosomal subunit. It is not involved in the protein synthesizing functions of that subunit. The protein is Large ribosomal subunit protein bL20 of Allorhizobium ampelinum (strain ATCC BAA-846 / DSM 112012 / S4) (Agrobacterium vitis (strain S4)).